Here is a 361-residue protein sequence, read N- to C-terminus: Peptide chain release factor 1 (361 aa).

The residue at position 235 (Gln235) is an N5-methylglutamine. The interval Ser284 to Arg306 is disordered.

Belongs to the prokaryotic/mitochondrial release factor family. Methylated by PrmC. Methylation increases the termination efficiency of RF1.

It localises to the cytoplasm. Functionally, peptide chain release factor 1 directs the termination of translation in response to the peptide chain termination codons UAG and UAA. The chain is Peptide chain release factor 1 from Xylella fastidiosa (strain 9a5c).